The chain runs to 134 residues: Profilin-2 (134 aa).

The cysteines at positions 13 and 118 are disulfide-linked. The Involved in PIP2 interaction motif lies at 84–100 (AVIRGKKGSGGITIKKT). Threonine 114 bears the Phosphothreonine mark.

It belongs to the profilin family. As to quaternary structure, occurs in many kinds of cells as a complex with monomeric actin in a 1:1 ratio. Phosphorylated by MAP kinases.

The protein localises to the cytoplasm. It is found in the cytoskeleton. Its function is as follows. Binds to actin and affects the structure of the cytoskeleton. At high concentrations, profilin prevents the polymerization of actin, whereas it enhances it at low concentrations. In Olea europaea (Common olive), this protein is Profilin-2.